The sequence spans 312 residues: ADP-L-glycero-D-manno-heptose-6-epimerase (312 aa).

Residues 10 to 11 (FI), 31 to 32 (DN), K38, K53, 75 to 79 (EGACS), and N92 each bind NADP(+). Residue Y140 is the Proton acceptor of the active site. Residue K144 participates in NADP(+) binding. Position 169 (N169) interacts with substrate. Residues V170 and K178 each coordinate NADP(+). K178 acts as the Proton acceptor in catalysis. Substrate is bound by residues S180, H187, 201–204 (FEGS), R209, and Y274.

The protein belongs to the NAD(P)-dependent epimerase/dehydratase family. HldD subfamily. In terms of assembly, homopentamer. Requires NADP(+) as cofactor.

The catalysed reaction is ADP-D-glycero-beta-D-manno-heptose = ADP-L-glycero-beta-D-manno-heptose. It functions in the pathway nucleotide-sugar biosynthesis; ADP-L-glycero-beta-D-manno-heptose biosynthesis; ADP-L-glycero-beta-D-manno-heptose from D-glycero-beta-D-manno-heptose 7-phosphate: step 4/4. In terms of biological role, catalyzes the interconversion between ADP-D-glycero-beta-D-manno-heptose and ADP-L-glycero-beta-D-manno-heptose via an epimerization at carbon 6 of the heptose. The protein is ADP-L-glycero-D-manno-heptose-6-epimerase of Proteus mirabilis (strain HI4320).